The sequence spans 326 residues: Phospho-N-acetylmuramoyl-pentapeptide-transferase (326 aa).

Helical transmembrane passes span 3–23 (ISIS…PAFI), 51–71 (TMGG…LALF), 79–99 (VGMI…DDFL), 115–135 (LALQ…GGDM), 138–158 (VFSY…FWLV), 169–189 (GIDG…GVIA), 195–215 (MDIL…FVFN), 221–243 (VFMG…MALH), and 306–326 (FFFW…LYLM).

Belongs to the glycosyltransferase 4 family. MraY subfamily. It depends on Mg(2+) as a cofactor.

The protein resides in the cell membrane. It carries out the reaction UDP-N-acetyl-alpha-D-muramoyl-L-alanyl-gamma-D-glutamyl-L-lysyl-D-alanyl-D-alanine + di-trans,octa-cis-undecaprenyl phosphate = Mur2Ac(oyl-L-Ala-gamma-D-Glu-L-Lys-D-Ala-D-Ala)-di-trans,octa-cis-undecaprenyl diphosphate + UMP. Its pathway is cell wall biogenesis; peptidoglycan biosynthesis. Functionally, catalyzes the initial step of the lipid cycle reactions in the biosynthesis of the cell wall peptidoglycan: transfers peptidoglycan precursor phospho-MurNAc-pentapeptide from UDP-MurNAc-pentapeptide onto the lipid carrier undecaprenyl phosphate, yielding undecaprenyl-pyrophosphoryl-MurNAc-pentapeptide, known as lipid I. The sequence is that of Phospho-N-acetylmuramoyl-pentapeptide-transferase from Streptococcus pneumoniae (strain ATCC 700669 / Spain 23F-1).